The following is a 144-amino-acid chain: Large ribosomal subunit protein uL14 (144 aa).

Residues 107–144 (NEGYTHSQHSNQREGGERIQAQPSPPHARRAVKTSFCR) are disordered.

This sequence belongs to the universal ribosomal protein uL14 family. In terms of assembly, part of the 50S ribosomal subunit. Forms a cluster with proteins L3 and L19. In the 70S ribosome, L14 and L19 interact and together make contacts with the 16S rRNA in bridges B5 and B8.

In terms of biological role, binds to 23S rRNA. Forms part of two intersubunit bridges in the 70S ribosome. The polypeptide is Large ribosomal subunit protein uL14 (Xanthobacter autotrophicus (strain ATCC BAA-1158 / Py2)).